We begin with the raw amino-acid sequence, 198 residues long: Recombination protein RecR (198 aa).

A C4-type zinc finger spans residues 57–72 (CSVCGNLTDDDPCLIC). Residues 80–175 (SVILVVEDSK…KVTRLARGLA (96 aa)) enclose the Toprim domain.

The protein belongs to the RecR family.

In terms of biological role, may play a role in DNA repair. It seems to be involved in an RecBC-independent recombinational process of DNA repair. It may act with RecF and RecO. This Streptococcus agalactiae serotype Ia (strain ATCC 27591 / A909 / CDC SS700) protein is Recombination protein RecR.